The primary structure comprises 152 residues: Transcriptional regulator MraZ (152 aa).

SpoVT-AbrB domains are found at residues 5–52 and 81–124; these read ATLV…PLPE and ASEC…DETT.

Belongs to the MraZ family. In terms of assembly, forms oligomers.

It localises to the cytoplasm. The protein resides in the nucleoid. Negatively regulates its own expression and that of the subsequent genes in the proximal part of the division and cell wall (dcw) gene cluster. Acts by binding directly to DNA. May also regulate the expression of genes outside the dcw cluster. The protein is Transcriptional regulator MraZ of Citrobacter koseri (strain ATCC BAA-895 / CDC 4225-83 / SGSC4696).